The chain runs to 482 residues: Iroquois-class homeodomain protein irx-5 (482 aa).

A DNA-binding region (homeobox) is located at residues 109–171 (DPAYRKNATR…NARRRLKKEN (63 aa)). Disordered regions lie at residues 173 to 307 (MTWT…HQSH) and 462 to 482 (QSQA…MSSI). The segment covering 182-198 (EDEEDDENIDLEKNEED) has biased composition (acidic residues). A compositionally biased stretch (basic and acidic residues) spans 199–256 (DPRKLEEKGDQDGDAGDQKRSPSAVDFDRLEGEVRQGKELDQTRSDSEQNEVEERNDL). Residues 264 to 273 (PTSPLCPPDQ) show a composition bias toward pro residues. Over residues 284-305 (HRHTVHNHHHQSIQQLHHHSHQ) the composition is skewed to basic residues. A compositionally biased stretch (basic and acidic residues) spans 467–482 (LNKDTPYEMKKGMSSI).

It belongs to the TALE/IRO homeobox family. As to expression, expressed in the neural plate in overlapping patterns with other irx members, which all share an anterior border of expression. Broadly expressed in the tailbud rhombencephalon (hindbrain). Outside the nervous system and at tailbud stages, expressed in the developing otic vesicle and branchial arches.

Its subcellular location is the nucleus. Functionally, acts partially redundantly with other irx members in neural patterning. Required for formation of the posterior forebrain, midbrain, hindbrain, and to a lesser extent, spinal cord. Patterns the neuroectoderm in both the anterior/posterior and dorsal/ventral axes. Does not appear to play a role in pronephros kidney development. Involved in craniofacial and gonadal development. Modulates the migration of progenitor cell populations in branchial arches and gonads by repressing CXCL12. This Xenopus tropicalis (Western clawed frog) protein is Iroquois-class homeodomain protein irx-5.